The chain runs to 668 residues: Type II methyltransferase M.MwoI (668 aa).

This sequence belongs to the N(4)/N(6)-methyltransferase family. N(4) subfamily.

It carries out the reaction a 2'-deoxycytidine in DNA + S-adenosyl-L-methionine = an N(4)-methyl-2'-deoxycytidine in DNA + S-adenosyl-L-homocysteine + H(+). Its function is as follows. A beta subtype methylase, recognizes the double-stranded DNA sequence 5'-GCNNNNNNNGC-3', methylates C-2 on both strands, and protects the DNA from cleavage by the MwoI endonuclease. The chain is Type II methyltransferase M.MwoI from Methanothermobacter wolfeii (Methanobacterium wolfei).